We begin with the raw amino-acid sequence, 41 residues long: Large ribosomal subunit protein bL36 (41 aa).

It belongs to the bacterial ribosomal protein bL36 family.

The polypeptide is Large ribosomal subunit protein bL36 (Erythrobacter litoralis (strain HTCC2594)).